The following is a 190-amino-acid chain: Thioredoxin F-type, chloroplastic (190 aa).

Positions 1–31 are disordered; the sequence is MALHLSLSHQSWTSPAHPITSSDPTRSSVPG. The transit peptide at 1-77 directs the protein to the chloroplast; the sequence is MALHLSLSHQ…SMEQALGTQE (77 aa). Polar residues predominate over residues 7-30; that stretch reads LSHQSWTSPAHPITSSDPTRSSVP. A Thioredoxin domain is found at 78–189; sequence MEAIVGKVTE…LLEAIQAARS (112 aa). Active-site nucleophile residues include C114 and C117. A disulfide bond links C114 and C117.

It belongs to the thioredoxin family. Plant F-type subfamily. Forms a complex with heterodimeric ferredoxin-thioredoxin reductase (FTR) and ferredoxin.

It is found in the plastid. Its subcellular location is the chloroplast. Its function is as follows. Participates in various redox reactions through the reversible oxidation of the active center dithiol to a disulfide. The F form is known to activate a number of enzymes of the photosynthetic carbon cycle. The sequence is that of Thioredoxin F-type, chloroplastic from Spinacia oleracea (Spinach).